A 61-amino-acid chain; its full sequence is Photosystem II reaction center protein K (61 aa).

Positions 1–24 (MLNIFSLICICLNSALYSSNFFFA) are excised as a propeptide. The helical transmembrane segment at 40–60 (MPVIPLFFFLLAFVWQAAVSF) threads the bilayer.

This sequence belongs to the PsbK family. As to quaternary structure, PSII is composed of 1 copy each of membrane proteins PsbA, PsbB, PsbC, PsbD, PsbE, PsbF, PsbH, PsbI, PsbJ, PsbK, PsbL, PsbM, PsbT, PsbX, PsbY, PsbZ, Psb30/Ycf12, at least 3 peripheral proteins of the oxygen-evolving complex and a large number of cofactors. It forms dimeric complexes.

It localises to the plastid. It is found in the chloroplast thylakoid membrane. Functionally, one of the components of the core complex of photosystem II (PSII). PSII is a light-driven water:plastoquinone oxidoreductase that uses light energy to abstract electrons from H(2)O, generating O(2) and a proton gradient subsequently used for ATP formation. It consists of a core antenna complex that captures photons, and an electron transfer chain that converts photonic excitation into a charge separation. This is Photosystem II reaction center protein K from Vitis vinifera (Grape).